The primary structure comprises 198 residues: MVLATALGLRFDGGVVLAADRRVSYNGFILSKSARKVFLINERVGVSTAGLPGDFQELVDVLKYNITMYELENEKAATPTNVAKLLSILLYQGRFSGIYYAELVVGGIDNSGPKIFVLDPAGGLMEENFSAVGSGAQIATGILERFFKEGMSEKEAVELAERAMREAISRDALSGDGIDLLIITSKGSRMEFIPVRTA.

A propeptide spans 1–4 (MVLA) (removed in mature form; by autocatalysis). T5 serves as the catalytic Nucleophile.

This sequence belongs to the peptidase T1B family. The 20S proteasome core is composed of 14 alpha and 14 beta subunits that assemble into four stacked heptameric rings, resulting in a barrel-shaped structure. The two inner rings, each composed of seven catalytic beta subunits, are sandwiched by two outer rings, each composed of seven alpha subunits. The catalytic chamber with the active sites is on the inside of the barrel. Has a gated structure, the ends of the cylinder being occluded by the N-termini of the alpha-subunits. Is capped at one or both ends by the proteasome regulatory ATPase, PAN.

The protein localises to the cytoplasm. It catalyses the reaction Cleavage of peptide bonds with very broad specificity.. Its activity is regulated as follows. The formation of the proteasomal ATPase PAN-20S proteasome complex, via the docking of the C-termini of PAN into the intersubunit pockets in the alpha-rings, triggers opening of the gate for substrate entry. Interconversion between the open-gate and close-gate conformations leads to a dynamic regulation of the 20S proteasome proteolysis activity. Its function is as follows. Component of the proteasome core, a large protease complex with broad specificity involved in protein degradation. The polypeptide is Proteasome subunit beta 2 (Korarchaeum cryptofilum (strain OPF8)).